Consider the following 417-residue polypeptide: Odorant receptor Or1 (417 aa).

The Cytoplasmic segment spans residues 1–2; the sequence is MK. A helical membrane pass occupies residues 3–23; that stretch reads LNKLNPRWDAYDRRDSFWLQL. The Extracellular segment spans residues 24–45; it reads LCLKYLGLWPPEDTDQATRNRY. The chain crosses the membrane as a helical span at residues 46 to 66; that stretch reads IAYGWALRIMFLHLYALTQAL. Residues 67–73 are Cytoplasmic-facing; that stretch reads YFKDVKD. A helical membrane pass occupies residues 74-94; sequence INDIANALFVLMTQVTLIYKL. Over 95–133 the chain is Extracellular; sequence EKFNYNIARIQACLRKLNCTLYHPKQREEFSPVLQSMSG. An N-linked (GlcNAc...) asparagine glycan is attached at Asn-112. Residues 134-154 form a helical membrane-spanning segment; that stretch reads VFWLMIFLMFVAIFTIIMWVM. Over 155–178 the chain is Cytoplasmic; that stretch reads SPAFDNERRLPVPAWFPVDYHHSD. A helical membrane pass occupies residues 179 to 199; sequence IVYGVLFLYQTIGIVMSATYN. The Extracellular segment spans residues 200–284; sequence FSTDTMFSGL…ILSFGDEVQD (85 aa). Residues 285 to 305 traverse the membrane as a helical segment; sequence IFQGSIFAQVCASVIIICMTL. At 306–317 the chain is on the cytoplasmic side; that stretch reads LQATGDDVTMAD. A helical membrane pass occupies residues 318 to 338; sequence LLGCGFYLLVMTSQVFIFCYV. Residues 339-417 lie on the Extracellular side of the membrane; it reads GNEISYTTDK…LAVLQSMESE (79 aa).

The protein belongs to the insect chemoreceptor superfamily. Heteromeric odorant receptor channel (TC 1.A.69) family. Or2a subfamily. In terms of tissue distribution, female-specific antennae and maxillary palp expression.

The protein resides in the cell membrane. In terms of biological role, odorant receptor which plays a critical role in the anthropophilic host-seeking behavior; establishes the host preference to transmit malaria. May participate in the phenomenon of decreased host-seeking behavior in disease vector mosquitoes after blood feeding. The sequence is that of Odorant receptor Or1 (OR1) from Anopheles gambiae (African malaria mosquito).